The following is a 212-amino-acid chain: Uridine kinase (212 aa).

ATP is bound at residue glycine 13 to threonine 20.

This sequence belongs to the uridine kinase family.

It localises to the cytoplasm. It carries out the reaction uridine + ATP = UMP + ADP + H(+). The enzyme catalyses cytidine + ATP = CMP + ADP + H(+). The protein operates within pyrimidine metabolism; CTP biosynthesis via salvage pathway; CTP from cytidine: step 1/3. It participates in pyrimidine metabolism; UMP biosynthesis via salvage pathway; UMP from uridine: step 1/1. This chain is Uridine kinase, found in Bacillus mycoides (strain KBAB4) (Bacillus weihenstephanensis).